The primary structure comprises 187 residues: Calcium and integrin-binding family member 2 (187 aa).

EF-hand domains are found at residues 66 to 101 (RENPFKERIVEAFSEDGEGNLTFNDFVDMFSVLCES), 103 to 138 (PRELKANYAFKIYDFNTDNFICKEDLELTLARLTKS), and 144 to 179 (EVVLVCDKVIEEADLDGDGKLGFADFEDMIAKAPDF). D116, N118, D120, D127, D157, D159, D161, K163, and D168 together coordinate Ca(2+).

As to quaternary structure, monomer. Homodimer. Interacts with WHRN and MYO7A. Interacts with ITGA2B (via C-terminus cytoplasmic tail region); the interactions are stabilized/increased in a calcium and magnesium-dependent manner. Interacts with ITGA7 (via C-terminus cytoplasmic tail region); the interactions are stabilized/increased in a calcium and magnesium-dependent manner. Interacts with TMC1. Interacts with TMC2.

Its subcellular location is the cytoplasm. It is found in the cell projection. The protein localises to the stereocilium. The protein resides in the photoreceptor inner segment. It localises to the cilium. Its subcellular location is the photoreceptor outer segment. It is found in the cell membrane. The protein localises to the sarcolemma. Its function is as follows. Calcium- and integrin-binding protein that plays a role in intracellular calcium homeostasis. Acts as an auxiliary subunit of the sensory mechanoelectrical transduction (MET) channel in hair cells. Essential for mechanoelectrical transduction (MET) currents in auditory hair cells and thereby required for hearing. Regulates the function of hair cell mechanotransduction by controlling the distribution of transmembrane channel-like proteins TMC1 and TMC2, and by regulating the function of the MET channels in hair cells. Required for the maintenance of auditory hair cell stereocilia bundle morphology and function and for hair-cell survival in the cochlea. Critical for proper photoreceptor cell maintenance and function. Plays a role in intracellular calcium homeostasis by decreasing ATP-induced calcium release. In Rattus norvegicus (Rat), this protein is Calcium and integrin-binding family member 2 (Cib2).